Here is a 386-residue protein sequence, read N- to C-terminus: MKLNPSLLTAAGLVSAQLASALPQASSSTVSPSPSPSATPGSFVTTSGLNFVIDGKTGYFAGSNSYWIGFQKNNDDVDLVFSHLQESGLKILRVWGFNDVNQKPTDGSVYYHLLADGTATVNEGEDGLQRLDYVVSSAEKHGIKLIINFVNFWDDYGGINAYVKAFGGSKEGFYTNDAMQAAYRAYIKAVISRYSDSTAIFAWELANEPRCQGCETTVLYNWIESTSQYIKSLDSKHLVCIGDEGFGLDTGSDGSYPYQYSEGSDFAKNLAIPTIDFGTFHLYPSSWGTTNDWGNGWVTSHGAACKAAGKPCLFEEYGVTSDHCAVEKPWQNTALNTTAISGDLYWQYGDQLSGGPSPDDGNTFYYGTDDFKCLVTDHIAAINSRK.

Residues 1–21 (MKLNPSLLTAAGLVSAQLASA) form the signal peptide. Positions 95 and 207 each coordinate substrate. Glutamate 208 (proton donor) is an active-site residue. Tyrosine 283 contacts substrate. The active-site Nucleophile is the glutamate 316. Residue asparagine 336 is glycosylated (N-linked (GlcNAc...) asparagine). Tryptophan 346 serves as a coordination point for substrate.

Belongs to the glycosyl hydrolase 5 (cellulase A) family.

It localises to the secreted. The catalysed reaction is Random hydrolysis of (1-&gt;4)-beta-D-mannosidic linkages in mannans, galactomannans and glucomannans.. Endo-1,4-mannanase, a crucial enzyme for depolymerization of seed galactomannans and wood galactoglucomannans. This chain is Probable mannan endo-1,4-beta-mannosidase A (manA), found in Aspergillus oryzae (strain ATCC 42149 / RIB 40) (Yellow koji mold).